The sequence spans 173 residues: Bilin biosynthesis protein PecF (173 aa).

The protein belongs to the CpcE/RpcE/PecE family.

Functionally, an enzyme involved in the biosynthesis of bilin. This chain is Bilin biosynthesis protein PecF (pecF), found in Nostoc sp. (strain PCC 7120 / SAG 25.82 / UTEX 2576).